The sequence spans 79 residues: Translational regulator CsrA (79 aa).

This sequence belongs to the CsrA/RsmA family. As to quaternary structure, homodimer; the beta-strands of each monomer intercalate to form a hydrophobic core, while the alpha-helices form wings that extend away from the core.

It is found in the cytoplasm. Its function is as follows. A translational regulator that binds mRNA to regulate translation initiation and/or mRNA stability. Usually binds in the 5'-UTR at or near the Shine-Dalgarno sequence preventing ribosome-binding, thus repressing translation. Its main target seems to be the major flagellin gene, while its function is anatagonized by FliW. This chain is Translational regulator CsrA, found in Helicobacter hepaticus (strain ATCC 51449 / 3B1).